The chain runs to 528 residues: Probable rhamnogalacturonate lyase A (528 aa).

Positions 1 to 20 (MFFQTGLLLSLSLWTKVAYA) are cleaved as a signal peptide. 2 disulfides stabilise this stretch: Cys50-Cys93 and Cys184-Cys193. Asn56 carries an N-linked (GlcNAc...) asparagine glycan. The N-linked (GlcNAc...) asparagine glycan is linked to Asn351.

It belongs to the polysaccharide lyase 4 family.

Its subcellular location is the secreted. It catalyses the reaction Endotype eliminative cleavage of L-alpha-rhamnopyranosyl-(1-&gt;4)-alpha-D-galactopyranosyluronic acid bonds of rhamnogalacturonan I domains in ramified hairy regions of pectin leaving L-rhamnopyranose at the reducing end and 4-deoxy-4,5-unsaturated D-galactopyranosyluronic acid at the non-reducing end.. In terms of biological role, pectinolytic enzymes consist of four classes of enzymes: pectin lyase, polygalacturonase, pectin methylesterase and rhamnogalacturonase. Degrades the rhamnogalacturonan I (RG-I) backbone of pectin. Active against linseed rhamnogalacturonan. This chain is Probable rhamnogalacturonate lyase A (rglA), found in Aspergillus clavatus (strain ATCC 1007 / CBS 513.65 / DSM 816 / NCTC 3887 / NRRL 1 / QM 1276 / 107).